The following is a 425-amino-acid chain: Probable threonylcarbamoyladenosine tRNA methylthiotransferase (425 aa).

In terms of domain architecture, MTTase N-terminal spans 2-110 (VKVYIENYGC…IVQAVEYAMR (109 aa)). Positions 11, 47, 76, 148, 152, and 155 each coordinate [4Fe-4S] cluster. Positions 134–363 (SPRNVYFILP…HRIRLQISYE (230 aa)) constitute a Radical SAM core domain. Residues 366-425 (RKYIGKKVKVLIHGEGKKGNVDAVTMNYKHIILPEGRKGEFREARVKNAASTYLLGEIIT) form the TRAM domain.

It belongs to the methylthiotransferase family. CDKAL1 subfamily. Requires [4Fe-4S] cluster as cofactor.

It carries out the reaction N(6)-L-threonylcarbamoyladenosine(37) in tRNA + (sulfur carrier)-SH + AH2 + 2 S-adenosyl-L-methionine = 2-methylsulfanyl-N(6)-L-threonylcarbamoyladenosine(37) in tRNA + (sulfur carrier)-H + 5'-deoxyadenosine + L-methionine + A + S-adenosyl-L-homocysteine + 2 H(+). In terms of biological role, catalyzes the methylthiolation of N6-threonylcarbamoyladenosine (t(6)A), leading to the formation of 2-methylthio-N6-threonylcarbamoyladenosine (ms(2)t(6)A) at position 37 in tRNAs that read codons beginning with adenine. This chain is Probable threonylcarbamoyladenosine tRNA methylthiotransferase, found in Pyrococcus horikoshii (strain ATCC 700860 / DSM 12428 / JCM 9974 / NBRC 100139 / OT-3).